A 201-amino-acid polypeptide reads, in one-letter code: Inosine triphosphate pyrophosphatase (201 aa).

16 to 21 (TGNAKK) contacts ITP. Glutamate 44 is a Mg(2+) binding site. ITP is bound by residues lysine 56, 72-73 (DT), lysine 89, 148-151 (FGWD), lysine 171, and 176-177 (HR).

The protein belongs to the HAM1 NTPase family. Homodimer. Requires Mg(2+) as cofactor. The cofactor is Mn(2+).

The protein resides in the cytoplasm. It carries out the reaction ITP + H2O = IMP + diphosphate + H(+). It catalyses the reaction dITP + H2O = dIMP + diphosphate + H(+). The enzyme catalyses XTP + H2O = XMP + diphosphate + H(+). In terms of biological role, pyrophosphatase that hydrolyzes non-canonical purine nucleotides such as inosine triphosphate (ITP), deoxyinosine triphosphate (dITP) or xanthosine 5'-triphosphate (XTP) to their respective monophosphate derivatives. The enzyme does not distinguish between the deoxy- and ribose forms. Probably excludes non-canonical purines from RNA and DNA precursor pools, thus preventing their incorporation into RNA and DNA and avoiding chromosomal lesions. This Zea mays (Maize) protein is Inosine triphosphate pyrophosphatase.